A 277-amino-acid polypeptide reads, in one-letter code: Shikimate dehydrogenase (NADP(+)) (277 aa).

Shikimate contacts are provided by residues 18 to 20 (SKS) and Thr65. The active-site Proton acceptor is the Lys69. Residue Glu81 participates in NADP(+) binding. Residues Asn90 and Asp106 each coordinate shikimate. NADP(+) contacts are provided by residues 130–134 (GAGGA), 154–159 (NRTFSK), and Met217. Tyr219 provides a ligand contact to shikimate. Gly241 lines the NADP(+) pocket.

Belongs to the shikimate dehydrogenase family. In terms of assembly, homodimer.

The enzyme catalyses shikimate + NADP(+) = 3-dehydroshikimate + NADPH + H(+). The protein operates within metabolic intermediate biosynthesis; chorismate biosynthesis; chorismate from D-erythrose 4-phosphate and phosphoenolpyruvate: step 4/7. In terms of biological role, involved in the biosynthesis of the chorismate, which leads to the biosynthesis of aromatic amino acids. Catalyzes the reversible NADPH linked reduction of 3-dehydroshikimate (DHSA) to yield shikimate (SA). This chain is Shikimate dehydrogenase (NADP(+)), found in Vibrio vulnificus (strain CMCP6).